Here is a 180-residue protein sequence, read N- to C-terminus: Large ribosomal subunit protein uL15 (180 aa).

The segment at Met1–Gln62 is disordered.

The protein belongs to the universal ribosomal protein uL15 family. As to quaternary structure, part of the 50S ribosomal subunit.

Binds to the 23S rRNA. The protein is Large ribosomal subunit protein uL15 of Leptospira interrogans serogroup Icterohaemorrhagiae serovar copenhageni (strain Fiocruz L1-130).